The sequence spans 553 residues: Mucolipin-3 (553 aa).

At 1–62 (MANPEVLVSS…FWARGRKPWK (62 aa)) the chain is on the cytoplasmic side. The interval 52-62 (KFWARGRKPWK) is interaction with phosphoinositides. A helical membrane pass occupies residues 63-83 (LAIQILKIAMVTIQLVLFGLS). The Extracellular portion of the chain corresponds to 84-283 (NQMVVAFKEE…VSGSIQKNTH (200 aa)). Positions 104–118 (KGYMDRMDDTYAVYT) are extracellular/lumenal pore loop. Asparagine 138 is a glycosylation site (N-linked (GlcNAc...) asparagine). A disulfide bridge connects residues cysteine 159 and cysteine 185. N-linked (GlcNAc...) asparagine glycosylation is present at asparagine 205. The cysteines at positions 238 and 269 are disulfide-linked. A helical membrane pass occupies residues 284 to 304 (YMMIFDAFVILTCLASLVLCA). Residues 305 to 341 (RSVIRGLQLQQEFVNFFLLHYKKEVSASDQMEFINGW) are Cytoplasmic-facing. The chain crosses the membrane as a helical span at residues 342–362 (YIMIIISDILTIVGSVLKMEI). Residues 363 to 371 (QAKSLTSYD) are Extracellular-facing. The chain crosses the membrane as a helical span at residues 372–392 (VCSILLGTSTMLVWLGVIRYL). Residues 393-414 (GFFAKYNLLILTLQAALPNVMR) lie on the Cytoplasmic side of the membrane. The chain crosses the membrane as a helical span at residues 415–435 (FCCCAAMIYLGYCFCGWIVLG). Residues 436 to 443 (PYHEKFRS) are Extracellular-facing. The pore-forming intramembrane region spans 444–464 (LNRVSECLFSLINGDDMFSTF). Positions 456–459 (NGDD) match the Selectivity filter motif. Over 465 to 475 (AKMQQKSYLVW) the chain is Extracellular. The chain crosses the membrane as a helical span at residues 476–497 (LFSRVYLYSFISLFIYMILSLF). At 498-553 (IALITDTYETIKHYQQDGFPETELRKFIAECKDLPNSGKYRLEDDPPGSLLCCCKK) the chain is on the cytoplasmic side.

It belongs to the transient receptor (TC 1.A.4) family. Polycystin subfamily. MCOLN3 sub-subfamily. Homotetramer. Can heterooligomerize with MCOLN1; heteromeric assemblies have different channel properties as compared to the respective homooligomers and may be tissue-specific. May heterooligomerize with TRPV5 to form a functional distinct ion channel. Interacts with GABARAPL2. N-glycosylated. Expressed in the cochlea; particularly in the inner and outer hair cells (at protein level).

The protein localises to the early endosome membrane. The protein resides in the late endosome membrane. It is found in the cytoplasmic vesicle. Its subcellular location is the autophagosome membrane. It localises to the cell projection. The protein localises to the stereocilium membrane. The enzyme catalyses Ca(2+)(in) = Ca(2+)(out). The catalysed reaction is Mg(2+)(in) = Mg(2+)(out). It catalyses the reaction K(+)(in) = K(+)(out). It carries out the reaction Na(+)(in) = Na(+)(out). With respect to regulation, channel activity is activated by PtdIns(3,5)P2 (phosphatidylinositol 3,5-bisphosphate). Inhibited by lumenal H(+) and Na(+). The channel pore shows dynamic behavior and undergoes spontaneous, Ca(2+)-dependent modulation when conducting Ca(2+). In terms of biological role, nonselective cation channel probably playing a role in the regulation of membrane trafficking events. Acts as a Ca(2+)-permeable cation channel with inwardly rectifying activity. Mediates release of Ca(2+) from endosomes to the cytoplasm, contributes to endosomal acidification and is involved in the regulation of membrane trafficking and fusion in the endosomal pathway. Also permeable to Mg(2+), Na(+) and K(+). Does not seem to act as mechanosensory transduction channel in inner ear sensory hair cells. Proposed to play a critical role at the cochlear stereocilia ankle-link region during hair-bundle growth. Involved in the regulation of autophagy. Through association with GABARAPL2 may be involved in autophagosome formation possibly providing Ca(2+) for the fusion process. Through a possible and probably tissue-specific heteromerization with MCOLN1 may be at least in part involved in many lysosome-dependent cellular events. Possible heteromeric ion channel assemblies with TRPV5 show pharmacological similarity with TRPML3. The chain is Mucolipin-3 (Mcoln3) from Mus musculus (Mouse).